The chain runs to 1167 residues: Non-toxic nonhemagglutinin (1167 aa).

The tract at residues 1-381 (MDIIDNVDIT…PQQIINLIDN (381 aa)) is light chain nLC. Residues 382 to 804 (NNILLIKSYI…LFNSKIQLTI (423 aa)) form an N-heavy chain nHN region. Positions 805 to 1167 (KNEKPEYNLL…LNDIYSWTLI (363 aa)) are C-heavy chain nHC.

It belongs to the botulism non-toxic nonhemagglutinin family.

In terms of biological role, expression of the ptox operon (ntnh-orfX1-orfX2-orfX3-pmp1) in B.thuringiensis kills Anopheles but not Aedes mosquito 3rd instar larvae. The ntnh-pmp1 construct is about half as toxic. The sequence is that of Non-toxic nonhemagglutinin from Paraclostridium bifermentans (Clostridium bifermentans).